The following is a 442-amino-acid chain: tRNA-2-methylthio-N(6)-dimethylallyladenosine synthase (442 aa).

One can recognise an MTTase N-terminal domain in the interval 6-122 (RKFYIHTFGC…LPALIAEAGD (117 aa)). 6 residues coordinate [4Fe-4S] cluster: Cys-15, Cys-51, Cys-85, Cys-157, Cys-161, and Cys-164. The Radical SAM core domain maps to 143–373 (RTQSLNAFVP…IDLQNGISAE (231 aa)). Residues 376–439 (GLAPGSVVEV…SATLFGQSAE (64 aa)) form the TRAM domain.

This sequence belongs to the methylthiotransferase family. MiaB subfamily. As to quaternary structure, monomer. [4Fe-4S] cluster serves as cofactor.

It is found in the cytoplasm. The enzyme catalyses N(6)-dimethylallyladenosine(37) in tRNA + (sulfur carrier)-SH + AH2 + 2 S-adenosyl-L-methionine = 2-methylsulfanyl-N(6)-dimethylallyladenosine(37) in tRNA + (sulfur carrier)-H + 5'-deoxyadenosine + L-methionine + A + S-adenosyl-L-homocysteine + 2 H(+). Catalyzes the methylthiolation of N6-(dimethylallyl)adenosine (i(6)A), leading to the formation of 2-methylthio-N6-(dimethylallyl)adenosine (ms(2)i(6)A) at position 37 in tRNAs that read codons beginning with uridine. This Chlorobium phaeobacteroides (strain DSM 266 / SMG 266 / 2430) protein is tRNA-2-methylthio-N(6)-dimethylallyladenosine synthase.